Consider the following 331-residue polypeptide: tRNA(Ile)-lysidine synthase (331 aa).

ATP is bound at residue 29–34; that stretch reads SGGPDS.

The protein belongs to the tRNA(Ile)-lysidine synthase family.

It is found in the cytoplasm. It carries out the reaction cytidine(34) in tRNA(Ile2) + L-lysine + ATP = lysidine(34) in tRNA(Ile2) + AMP + diphosphate + H(+). In terms of biological role, ligates lysine onto the cytidine present at position 34 of the AUA codon-specific tRNA(Ile) that contains the anticodon CAU, in an ATP-dependent manner. Cytidine is converted to lysidine, thus changing the amino acid specificity of the tRNA from methionine to isoleucine. The chain is tRNA(Ile)-lysidine synthase from Chlorobaculum tepidum (strain ATCC 49652 / DSM 12025 / NBRC 103806 / TLS) (Chlorobium tepidum).